Here is a 698-residue protein sequence, read N- to C-terminus: Endogenous retrovirus group K member 9 Env polyprotein (698 aa).

Residues 1 to 47 form a disordered region; it reads MNPSEMQRKAPPRRRRHRNRAPLTHKMNKMVTSEEQMKLPSTKKAEP. The signal sequence occupies residues 1 to 89; that stretch reads MNPSEMQRKA…ALMIVSMVVS (89 aa). The segment covering 10-20 has biased composition (basic residues); the sequence is APPRRRRHRNR. At 90 to 631 the chain is on the extracellular side; that stretch reads LPMPAGAAAA…NLNPVTWVKT (542 aa). Residues Asn100, Asn128, Asn153, Asn273, Asn354, Asn371, and Asn460 are each glycosylated (N-linked (GlcNAc...) asparagine). Residues 465-485 form a fusion peptide region; that stretch reads FIFTLIAVIMGLIAVTATAAV. Residues Asn506, Asn553, Asn565, and Asn584 are each glycosylated (N-linked (GlcNAc...) asparagine). Residues 632–652 form a helical membrane-spanning segment; that stretch reads IGSTTIINLILILVCLFCLLL. At 653-698 the chain is on the cytoplasmic side; that stretch reads VCRCTQQLRRDSDHRERAMMTMAVLSKRKGGNVGKSKRDQIVTVSV.

The protein belongs to the beta type-B retroviral envelope protein family. HERV class-II K(HML-2) env subfamily. In terms of assembly, the surface (SU) and transmembrane (TM) proteins form a heterodimer. SU and TM are attached by noncovalent interactions or by a labile interchain disulfide bond. Post-translationally, specific enzymatic cleavages in vivo yield the mature SU and TM proteins.

Its subcellular location is the cell membrane. The protein localises to the virion. Functionally, retroviral envelope proteins mediate receptor recognition and membrane fusion during early infection. Endogenous envelope proteins may have kept, lost or modified their original function during evolution. This endogenous envelope protein has lost its original fusogenic properties. In terms of biological role, SU mediates receptor recognition. Its function is as follows. TM anchors the envelope heterodimer to the viral membrane through one transmembrane domain. The other hydrophobic domain, called fusion peptide, mediates fusion of the viral membrane with the target cell membrane. This is Endogenous retrovirus group K member 9 Env polyprotein (ERVK-9) from Homo sapiens (Human).